A 267-amino-acid polypeptide reads, in one-letter code: Fibroin light chain (267 aa).

Residues 1–16 (MLPFVLVLLVATSALA) form the signal peptide. Position 19 is an N-acetylserine; in short form (serine 19). A disulfide bridge links cysteine 103 with cysteine 162.

In terms of assembly, silk fibroin elementary unit consists in a disulfide-linked heavy and light chain and a p25 glycoprotein in molar ratios of 6:6:1. This results in a complex of approximately 2.3 MDa. In terms of processing, partially N-terminally processed to yield a short form which lacks the first two residues of the long form. Post-translationally, the interchain disulfide bridge is essential for the intracellular transport and secretion of fibroin. Produced exclusively in the posterior (PSG) section of silk glands, which are essentially modified salivary glands.

The protein resides in the secreted. Functionally, it is likely that the major role of L-chain is to prevent the retention of H-chain in ER by forming the disulfide linkage. This is Fibroin light chain (FIBL) from Galleria mellonella (Greater wax moth).